The following is a 215-amino-acid chain: 3-demethoxyubiquinol 3-hydroxylase (215 aa).

The disordered stretch occupies residues 26 to 47 (PSSAHSQRPSPAVVQPEHKMSE). 6 residues coordinate Fe cation: glutamate 64, glutamate 94, histidine 97, glutamate 146, glutamate 178, and histidine 181.

It belongs to the COQ7 family. Fe cation is required as a cofactor.

The protein localises to the cell membrane. It catalyses the reaction a 5-methoxy-2-methyl-3-(all-trans-polyprenyl)benzene-1,4-diol + AH2 + O2 = a 3-demethylubiquinol + A + H2O. It participates in cofactor biosynthesis; ubiquinone biosynthesis. Catalyzes the hydroxylation of 2-nonaprenyl-3-methyl-6-methoxy-1,4-benzoquinol during ubiquinone biosynthesis. This Pseudomonas syringae pv. syringae (strain B728a) protein is 3-demethoxyubiquinol 3-hydroxylase.